We begin with the raw amino-acid sequence, 170 residues long: Zinc finger protein 576 (170 aa).

The tract at residues 1–29 is disordered; that stretch reads MEDPNPEENMKQQDSPKERSPQSPGGNIC. Over residues 8–20 the composition is skewed to basic and acidic residues; that stretch reads ENMKQQDSPKERS. C2H2-type zinc fingers lie at residues 34–57, 71–93, 112–134, and 143–165; these read PKCT…KREH, FICF…QRSH, FPCP…RQMH, and FACT…YIRH.

It belongs to the krueppel C2H2-type zinc-finger protein family.

It is found in the nucleus. Its function is as follows. May be involved in transcriptional regulation. In Homo sapiens (Human), this protein is Zinc finger protein 576 (ZNF576).